The chain runs to 214 residues: uncharacterized protein (214 aa).

5 helical membrane-spanning segments follow: residues leucine 18–valine 38, aspartate 51–glycine 71, isoleucine 80–valine 100, leucine 108–valine 128, and phenylalanine 145–isoleucine 165.

Its subcellular location is the cell membrane. This is an uncharacterized protein from Geobacillus stearothermophilus (Bacillus stearothermophilus).